A 480-amino-acid polypeptide reads, in one-letter code: Protein nucleotidyltransferase YdiU (480 aa).

8 residues coordinate ATP: Gly86, Gly88, Arg89, Lys109, Asp121, Gly122, Arg172, and Arg179. Catalysis depends on Asp248, which acts as the Proton acceptor. Positions 249 and 258 each coordinate Mg(2+). Asp258 is an ATP binding site.

Belongs to the SELO family. The cofactor is Mg(2+). Mn(2+) serves as cofactor.

The enzyme catalyses L-seryl-[protein] + ATP = 3-O-(5'-adenylyl)-L-seryl-[protein] + diphosphate. The catalysed reaction is L-threonyl-[protein] + ATP = 3-O-(5'-adenylyl)-L-threonyl-[protein] + diphosphate. It catalyses the reaction L-tyrosyl-[protein] + ATP = O-(5'-adenylyl)-L-tyrosyl-[protein] + diphosphate. It carries out the reaction L-histidyl-[protein] + UTP = N(tele)-(5'-uridylyl)-L-histidyl-[protein] + diphosphate. The enzyme catalyses L-seryl-[protein] + UTP = O-(5'-uridylyl)-L-seryl-[protein] + diphosphate. The catalysed reaction is L-tyrosyl-[protein] + UTP = O-(5'-uridylyl)-L-tyrosyl-[protein] + diphosphate. In terms of biological role, nucleotidyltransferase involved in the post-translational modification of proteins. It can catalyze the addition of adenosine monophosphate (AMP) or uridine monophosphate (UMP) to a protein, resulting in modifications known as AMPylation and UMPylation. The polypeptide is Protein nucleotidyltransferase YdiU (Klebsiella pneumoniae subsp. pneumoniae (strain ATCC 700721 / MGH 78578)).